Consider the following 438-residue polypeptide: GTPase Obg (438 aa).

One can recognise an Obg domain in the interval 1 to 159; sequence MAFRDVLNIE…RRVRLELRLI (159 aa). In terms of domain architecture, OBG-type G spans 160–332; the sequence is ADVGLVGYPN…LRETLFQLLP (173 aa). ATP is bound by residues 166-173, 191-195, 219-222, 285-288, and 313-315; these read GYPNAGKS, FTTLS, DIPG, NKVE, and SAK. Ser173 and Thr193 together coordinate Mg(2+). The OCT domain maps to 357 to 435; that stretch reads IVFREDAPAK…IGTFRFEYFD (79 aa).

This sequence belongs to the TRAFAC class OBG-HflX-like GTPase superfamily. OBG GTPase family. As to quaternary structure, monomer. Mg(2+) serves as cofactor.

Its subcellular location is the cytoplasm. Its function is as follows. An essential GTPase which binds GTP, GDP and possibly (p)ppGpp with moderate affinity, with high nucleotide exchange rates and a fairly low GTP hydrolysis rate. Plays a role in control of the cell cycle, stress response, ribosome biogenesis and in those bacteria that undergo differentiation, in morphogenesis control. In Deinococcus radiodurans (strain ATCC 13939 / DSM 20539 / JCM 16871 / CCUG 27074 / LMG 4051 / NBRC 15346 / NCIMB 9279 / VKM B-1422 / R1), this protein is GTPase Obg.